Consider the following 152-residue polypeptide: Chemokine-like factor (152 aa).

The MARVEL domain occupies 13–133 (FCCTLKCFVK…DCALMCQKLR (121 aa)). The next 4 membrane-spanning stretches (helical) occupy residues 19-39 (CFVK…FIVG), 46-66 (IVIT…YTCG), 81-101 (VINS…ALIP), and 108-128 (ILGG…CALM).

The protein belongs to the chemokine-like factor family. In terms of tissue distribution, ubiquitous.

The protein localises to the membrane. May play an important role in inflammation and regeneration of skeletal muscle. Essential for embryonic development. The polypeptide is Chemokine-like factor (Cklf) (Mus musculus (Mouse)).